The chain runs to 242 residues: Biosynthetic peptidoglycan transglycosylase (242 aa).

A helical membrane pass occupies residues L19–V39.

It belongs to the glycosyltransferase 51 family.

It is found in the cell inner membrane. The catalysed reaction is [GlcNAc-(1-&gt;4)-Mur2Ac(oyl-L-Ala-gamma-D-Glu-L-Lys-D-Ala-D-Ala)](n)-di-trans,octa-cis-undecaprenyl diphosphate + beta-D-GlcNAc-(1-&gt;4)-Mur2Ac(oyl-L-Ala-gamma-D-Glu-L-Lys-D-Ala-D-Ala)-di-trans,octa-cis-undecaprenyl diphosphate = [GlcNAc-(1-&gt;4)-Mur2Ac(oyl-L-Ala-gamma-D-Glu-L-Lys-D-Ala-D-Ala)](n+1)-di-trans,octa-cis-undecaprenyl diphosphate + di-trans,octa-cis-undecaprenyl diphosphate + H(+). The protein operates within cell wall biogenesis; peptidoglycan biosynthesis. In terms of biological role, peptidoglycan polymerase that catalyzes glycan chain elongation from lipid-linked precursors. The chain is Biosynthetic peptidoglycan transglycosylase from Escherichia coli O127:H6 (strain E2348/69 / EPEC).